Here is a 57-residue protein sequence, read N- to C-terminus: UPF0391 membrane protein IL0696 (57 aa).

2 consecutive transmembrane segments (helical) span residues 4-24 (WVLIFLAVAVVAAILGFGGIA) and 28-48 (AGIAKIIFYIFIILFAISLVV).

This sequence belongs to the UPF0391 family.

It localises to the cell membrane. The protein is UPF0391 membrane protein IL0696 of Idiomarina loihiensis (strain ATCC BAA-735 / DSM 15497 / L2-TR).